Here is a 603-residue protein sequence, read N- to C-terminus: Elongation factor 4 (603 aa).

Residues 7–189 (VRIRNFCIIA…AVVERIPPPP (183 aa)) form the tr-type G domain. Residues 19-24 (DHGKST) and 136-139 (NKID) contribute to the GTP site.

This sequence belongs to the TRAFAC class translation factor GTPase superfamily. Classic translation factor GTPase family. LepA subfamily.

It localises to the cell inner membrane. The catalysed reaction is GTP + H2O = GDP + phosphate + H(+). Its function is as follows. Required for accurate and efficient protein synthesis under certain stress conditions. May act as a fidelity factor of the translation reaction, by catalyzing a one-codon backward translocation of tRNAs on improperly translocated ribosomes. Back-translocation proceeds from a post-translocation (POST) complex to a pre-translocation (PRE) complex, thus giving elongation factor G a second chance to translocate the tRNAs correctly. Binds to ribosomes in a GTP-dependent manner. The sequence is that of Elongation factor 4 from Trichormus variabilis (strain ATCC 29413 / PCC 7937) (Anabaena variabilis).